A 7094-amino-acid polypeptide reads, in one-letter code: Replicase polyprotein 1ab (7094 aa).

Residues 54 to 196 (PENHVMVDCR…PWVMYLRKCG (143 aa)) enclose the CoV Nsp1 globular domain. In terms of domain architecture, BetaCoV Nsp1 C-terminal spans 216–246 (FKVEDAYDLVHDEPKGKFSKKAYALIRGYRG). The 270-residue stretch at 250 to 519 (LLYVDQYGCD…LICKALYLDY (270 aa)) folds into the CoV Nsp2 N-terminal domain. Zn(2+) is bound by residues Cys392, Cys397, Cys413, and Cys416. Residues 392 to 416 (CEQDLCDFKGWVPGNMIDGFACTTC) are C4. Residues 524–713 (CGNLHQRELL…AQAFRSVAKV (190 aa)) form the CoV Nsp2 middle domain. A CoV Nsp2 C-terminal domain is found at 733–851 (RRRICLSGSK…LDQAWRVPCA (119 aa)). Residues 853–966 (RRVTFKEQPT…LYCAFTAPED (114 aa)) enclose the Ubiquitin-like 1 domain. The Peptidase C16 1 domain maps to 1036-1274 (DLESVIQDYE…IAQLYGSCIT (239 aa)). The For PL1-PRO activity role is filled by Cys1074. Cys1151, Cys1154, Cys1177, and Cys1179 together coordinate Zn(2+). Residues 1151–1179 (CIKCDLALKLKGLDAMFFYGDVVSHVCKC) form a C4-type 1 zinc finger. Catalysis depends on for PL1-PRO activity residues His1225 and Asp1236. The Macro domain maps to 1275–1435 (PNVCFVKGDI…LISKCQITAV (161 aa)). Residues 1491–1563 (DDARTFVQSN…VAQIKALFLD (73 aa)) form the DPUP domain. The region spanning 1562-1617 (LDKVDILLTVDGVNFTNRFVPVGESFGKSLGNVFCDGVNVTKHKCDINYKGKVFFQ) is the Ubiquitin-like 2 domain. A Peptidase C16 2 domain is found at 1631–1892 (SSFNFDQKEL…KIEYNPDLSQ (262 aa)). Catalysis depends on Cys1671, which acts as the For PL2-PRO activity. Zn(2+) contacts are provided by Cys1749, Cys1751, Cys1783, and Cys1785. The C4-type 2 zinc finger occupies 1749–1785 (CKCGVKQEQRTGVDAVMHFGTLSREDLEIGYTVDCSC). Catalysis depends on for PL2-PRO activity residues His1828 and Asp1842. The Nucleic acid-binding domain maps to 1906-2007 (IKAQFKTFEK…TYFNRPLLVD (102 aa)). In terms of domain architecture, G2M spans 2020–2169 (DDGGDISESD…ADNKVIYTTE (150 aa)). The next 3 helical transmembrane spans lie at 2138–2158 (ISAC…WIKI), 2199–2219 (ACII…NVIF), and 2227–2247 (IGFL…TFSL). An HD1 region spans residues 2138–2385 (ISACFNFIKW…ASFIKLFILF (248 aa)). The 62-residue stretch at 2235–2296 (GKIAQWIKST…AIDVVQYEAD (62 aa)) folds into the 3Ecto domain. Disulfide bonds link Cys2251–Cys2275 and Cys2266–Cys2272. 3 consecutive transmembrane segments (helical) span residues 2313-2333 (LIVS…LISI), 2343-2363 (LFML…ANML), and 2365-2385 (AHVF…FILF). The interval 2383 to 2473 (ILFRHVAYGC…ELKRPIQPTD (91 aa)) is Y1. Positions 2383-2750 (ILFRHVAYGC…LTTPFSLKGG (368 aa)) constitute a CoV Nsp3 Y domain. Positions 2387, 2392, 2397, 2400, 2433, 2436, 2440, and 2443 each coordinate Zn(2+). A ZF1 region spans residues 2387–2400 (HVAYGCSKPGCLFC). The segment at 2433 to 2443 (CSKHQWNCIDC) is ZF2. The segment at 2474-2566 (VAYHTVTDVK…MVDKNLITTA (93 aa)) is Y2. The coV-Y stretch occupies residues 2474 to 2750 (VAYHTVTDVK…LTTPFSLKGG (277 aa)). Residues 2567–2649 (NTGTSVTETM…DSVMSAVSAG (83 aa)) form a Y3 region. The Y4 stretch occupies residues 2650 to 2750 (LELTDESCNN…LTTPFSLKGG (101 aa)). The next 7 helical transmembrane spans lie at 2752-2772 (VFSY…IGLW), 2824-2844 (STFG…VAVV), 3009-3029 (VFDL…FLAL), 3031-3051 (ASSI…YYLI), 3063-3083 (IVFV…VFQV), 3090-3110 (VYAI…SVIM), and 3115-3135 (LVMY…SVVV). The interval 2752–3135 (VFSYFVYVCF…FCLLYISVVV (384 aa)) is HD2. The Nsp4C domain maps to 3149–3246 (LGTSVRSDGT…TASVSTSFLQ (98 aa)). The region spanning 3247–3549 (SGIVKMVNPT…YQQLAGIKLQ (303 aa)) is the Peptidase C30 domain. Active-site for 3CL-PRO activity residues include His3287 and Cys3391. A run of 7 helical transmembrane segments spans residues 3558–3578 (GIVC…TAFV), 3588–3608 (TNML…MLLV), 3614–3634 (YLTM…YLVV), 3657–3677 (TYTD…FVTL), 3684–3704 (LFSF…WYMG), 3711–3731 (ILLM…LSMA), and 3755–3775 (IVLV…GLFS). Positions 3558–3775 (GIVCWIMAST…IISCYWGLFS (218 aa)) are HD3. In terms of domain architecture, RdRp Nsp7 cofactor spans 3837–3925 (SKLTDVKCAN…DYAKDNTVLQ (89 aa)). Positions 3926 to 4122 (ALQSEFVNMA…HNEVSATVLQ (197 aa)) constitute a RdRp Nsp8 cofactor domain. The region spanning 4123-4232 (NNELMPAKLK…GTISSTVRLQ (110 aa)) is the Nsp9 ssRNA-binding domain. Positions 4233–4370 (AGTATEYASN…CVSTDTTVQS (138 aa)) constitute an ExoN/MTase coactivator domain. Positions 4306, 4309, 4315, 4322, 4348, 4351, 4359, and 4361 each coordinate Zn(2+). Zinc fingers lie at residues 4306 to 4322 (CIYC…DGLC) and 4348 to 4361 (CQVC…SCSC). In terms of domain architecture, NiRAN spans 4375–4630 (FLNRVRGTSV…DCELYVNNAY (256 aa)). Mn(2+)-binding residues include Asn4578 and Asp4587. The Nsp12 Interface domain maps to 4631 to 4729 (RLFDLVQYDF…MNMDVDTHRY (99 aa)). Zn(2+) contacts are provided by His4660, Cys4666, Cys4671, Cys4675, and Cys4852. One can recognise a Nsp12 RNA-dependent RNA polymerase domain in the interval 4730–5297 (RLSLKDLLLY…NMYLRSAVMQ (568 aa)). Positions 4732–4946 (SLKDLLLYAA…HQKCLKSIAA (215 aa)) are rdRp Fingers N-ter. Positions 4947–4985 (TRGVPVVIGTTKFYGGWDDMLRRLIKDVDNPVLMGWDYP) are rdRp Palm N-ter. One can recognise a RdRp catalytic domain in the interval 4977–5139 (PVLMGWDYPK…CYNSDYASKG (163 aa)). Residues 4986 to 5044 (KCDRAMPNILRIVSSLVLARKHEACCSQSDRFYRLANECAQVLSEIVMCGGCYYVKPGG) form a rdRp Fingers C-ter region. Zn(2+) contacts are provided by His5007, Cys5010, and Cys5011. The tract at residues 5045 to 5180 (TSSGDATTAF…NNGPHEFCSQ (136 aa)) is rdRp Palm C-ter. Catalysis depends on residues Ser5124, Asp5125, and Asp5126. Residues 5181–5297 (HTMLVKMDGD…NMYLRSAVMQ (117 aa)) are rdRp Thumb. Positions 5298–5410 (SVGACVVCSS…DDFNRIASCK (113 aa)) constitute a CV ZBD domain. Zn(2+) contacts are provided by Cys5302, Cys5305, Cys5313, Cys5316, Cys5323, Cys5326, His5330, His5336, Cys5347, Cys5352, Cys5369, and His5372. Positions 5553 to 5734 (SVLETFQNNV…MCCLGPDIFL (182 aa)) constitute a (+)RNA virus helicase ATP-binding domain. Residue 5578 to 5585 (GPPGTGKS) coordinates ATP. Residues 5735–5904 (GTCYRCPKEI…VETRVQCSTN (170 aa)) enclose the (+)RNA virus helicase C-terminal domain. The ExoN domain occupies 5971–6186 (LFITKEEAVK…RCLAVYDCFC (216 aa)). Catalysis depends on residues Asp5989, Glu5991, and Glu6090. Cys6106, Cys6109, Cys6125, His6128, His6156, Cys6160, and His6163 together coordinate Zn(2+). Residues His6167 and Asp6172 contribute to the active site. Zn(2+) is bound at residue Cys6178. The region spanning 6195–6421 (YPIISNELSI…NLWNTFTKLQ (227 aa)) is the N7-MTase domain. An S-adenosyl-L-methionine-binding site is contributed by 6230 to 6236 (DIGNPKA). The interval 6308–6322 (CNGGSLYVNKHAFHT) is gpppA-binding. 4 residues coordinate Zn(2+): Cys6346, Cys6367, Cys6378, and His6381. The region spanning 6422–6482 (SLENVVYNLV…NVAVELFAKR (61 aa)) is the Nsp15 N-terminal oligomerization domain. In terms of domain architecture, AV-Nsp11N/CoV-Nsp15M spans 6483–6603 (SIRHHPELKL…FAVRKEGQDV (121 aa)). In terms of domain architecture, NendoU spans 6653 to 6792 (TCRTDMEKDF…NDEKVMTFYP (140 aa)). Catalysis depends on residues His6683, His6698, Lys6738, Lys6841, Asp6925, Lys6965, and Glu6998. Residues 6797–7091 (ASDWKPGYSM…KEVFVGDSLV (295 aa)) enclose the Nidovirus-type SAM-dependent 2'-O-MTase domain.

This sequence belongs to the coronaviruses polyprotein 1ab family. As to quaternary structure, interacts with host PHB and PHB2. In terms of assembly, interacts with papain-like protease nsp3 and non-structural protein 6. Monomer. Homodimer. Only the homodimer shows catalytic activity. As to quaternary structure, interacts with nsp8 and nsp12 to form the replication-transcription complex (RTC): nsp12, nsp7, two subunits of nsp8, and up to two subunits of nsp13. In terms of assembly, interacts with nsp7, nsp13 and nsp12 to form the replication-transcription complex (RTC): nsp12, nsp7, two subunits of nsp8, and up to two subunits of nsp13. Interacts with nsp12. As to quaternary structure, interacts with proofreading exoribonuclease nsp14 and 2'-O-methyltransferase nsp16; these interactions enhance nsp14 and nsp16 enzymatic activities. In terms of assembly, interacts with nsp7 and nsp8 to form the replication-transcription complex (RTC): nsp12, nsp7, two subunits of nsp8, and up to two subunits of nsp13. Interacts with nsp9. Interacts with nsp8 to form the replication-transcription complex (RTC): nsp12, nsp7, two subunits of nsp8, and up to two subunits of nsp13. The cofactor is Mn(2+). It depends on Mg(2+) as a cofactor. Post-translationally, specific enzymatic cleavages in vivo by its own proteases yield mature proteins. 3CL-PRO and PL-PRO proteinases are autocatalytically processed.

It localises to the host membrane. The protein localises to the host cytoplasm. The protein resides in the host perinuclear region. Its subcellular location is the host endoplasmic reticulum-Golgi intermediate compartment. It catalyses the reaction RNA(n) + a ribonucleoside 5'-triphosphate = RNA(n+1) + diphosphate. It carries out the reaction ATP + H2O = ADP + phosphate + H(+). The enzyme catalyses Thiol-dependent hydrolysis of ester, thioester, amide, peptide and isopeptide bonds formed by the C-terminal Gly of ubiquitin (a 76-residue protein attached to proteins as an intracellular targeting signal).. The catalysed reaction is a 5'-end (N(7)-methyl 5'-triphosphoguanosine)-ribonucleoside in mRNA + S-adenosyl-L-methionine = a 5'-end (N(7)-methyl 5'-triphosphoguanosine)-(2'-O-methyl-ribonucleoside) in mRNA + S-adenosyl-L-homocysteine + H(+). It catalyses the reaction uridylyl-uridylyl-ribonucleotide-RNA = a 3'-end uridylyl-2',3'-cyclophospho-uridine-RNA + a 5'-end dephospho-ribonucleoside-RNA. It carries out the reaction a 5'-end diphospho-ribonucleoside in mRNA + GTP + H(+) = a 5'-end (5'-triphosphoguanosine)-ribonucleoside in mRNA + diphosphate. The enzyme catalyses a 5'-end (5'-triphosphoguanosine)-ribonucleoside in mRNA + S-adenosyl-L-methionine = a 5'-end (N(7)-methyl 5'-triphosphoguanosine)-ribonucleoside in mRNA + S-adenosyl-L-homocysteine. In terms of biological role, the replicase polyprotein of coronaviruses is a multifunctional protein: it contains the activities necessary for the transcription of negative stranded RNA, leader RNA, subgenomic mRNAs and progeny virion RNA as well as proteinases responsible for the cleavage of the polyprotein into functional products. Inhibits host translation by interacting with the 40S ribosomal subunit. The nsp1-40S ribosome complex further induces an endonucleolytic cleavage near the 5'UTR of host mRNAs, targeting them for degradation. Viral mRNAs are not susceptible to nsp1-mediated endonucleolytic RNA cleavage thanks to the presence of a 5'-end leader sequence and are therefore protected from degradation. By suppressing host gene expression, nsp1 facilitates efficient viral gene expression in infected cells and evasion from host immune response. Functionally, may play a role in the modulation of host cell survival signaling pathway by interacting with host PHB and PHB2. Indeed, these two proteins play a role in maintaining the functional integrity of the mitochondria and protecting cells from various stresses. Its function is as follows. Responsible for the cleavages located at the N-terminus of the replicase polyprotein. In addition, PL-PRO possesses a deubiquitinating/deISGylating activity and processes both 'Lys-48'- and 'Lys-63'-linked polyubiquitin chains from cellular substrates. Participates together with nsp4 in the assembly of virally-induced cytoplasmic double-membrane vesicles necessary for viral replication. Antagonizes innate immune induction of type I interferon by blocking the phosphorylation, dimerization and subsequent nuclear translocation of host IRF3. Also prevents host NF-kappa-B signaling. In terms of biological role, participates in the assembly of virally-induced cytoplasmic double-membrane vesicles necessary for viral replication. Cleaves the C-terminus of replicase polyprotein at 11 sites. Recognizes substrates containing the core sequence [ILMVF]-Q-|-[SGACN]. Also able to bind an ADP-ribose-1''-phosphate (ADRP). Functionally, plays a role in the initial induction of autophagosomes from host endoplasmic reticulum. Later, limits the expansion of these phagosomes that are no longer able to deliver viral components to lysosomes. Its function is as follows. Forms a hexadecamer with nsp8 (8 subunits of each) that may participate in viral replication by acting as a primase. Alternatively, may synthesize substantially longer products than oligonucleotide primers. In terms of biological role, forms a hexadecamer with nsp7 (8 subunits of each) that may participate in viral replication by acting as a primase. Alternatively, may synthesize substantially longer products than oligonucleotide primers. Forms a primer, NSP9-pU, which is utilized by the polymerase for the initiation of RNA chains. Interacts with ribosome signal recognition particle RNA (SRP). Together with NSP8, suppress protein integration into the cell membrane, thereby disrupting host immune defenses. Functionally, plays a pivotal role in viral transcription by stimulating both nsp14 3'-5' exoribonuclease and nsp16 2'-O-methyltransferase activities. Therefore plays an essential role in viral mRNAs cap methylation. Its function is as follows. RNA-directed RNA polymerase that catalyzes the transcription of viral genomic and subgenomic RNAs. Acts in complex with nsp7 and nsp8 to transcribe both the minus and positive strands of genomic RNA. The kinase-like NiRAN domain of NSP12 attaches one or more nucleotides to the amino terminus of NSP9, forming a covalent RNA-protein intermediate that serves as transcription/replication primer. Subgenomic RNAs (sgRNAs) are formed by discontinuous transcription: The polymerase has the ability to pause at transcription-regulating sequences (TRS) and jump to the leader TRS, resulting in a major deletion. This creates a series of subgenomic RNAs that are replicated, transcribed and translated. In addition, Nsp12 is a subunit of the viral RNA capping enzyme that catalyzes the RNA guanylyltransferase reaction for genomic and sub-genomic RNAs. Subsequently, the NiRAN domain transfers RNA to GDP, and forms the core cap structure GpppA-RNA. In terms of biological role, multi-functional protein with a zinc-binding domain in N-terminus displaying RNA and DNA duplex-unwinding activities with 5' to 3' polarity. Activity of helicase is dependent on magnesium. Plays a role in viral RNA synthesis through two distinct activities. The N7-guanine methyltransferase activity plays a role in the formation of the cap structure GpppA-RNA. The proofreading exoribonuclease reduces the sensitivity of the virus to RNA mutagens during replication. This activity acts on both ssRNA and dsRNA in a 3'-5' direction. Functionally, plays a role in viral transcription/replication and prevents the simultaneous activation of host cell dsRNA sensors, such as MDA5/IFIH1, OAS, and PKR. Acts by degrading the 5'-polyuridines generated during replication of the poly(A) region of viral genomic and subgenomic RNAs. Catalyzes a two-step reaction in which a 2'3'-cyclic phosphate (2'3'-cP) is first generated by 2'-O transesterification, which is then hydrolyzed to a 3'-phosphate (3'-P). If not degraded, poly(U) RNA would hybridize with poly(A) RNA tails and activate host dsRNA sensors. Its function is as follows. Methyltransferase that mediates mRNA cap 2'-O-ribose methylation to the 5'-cap structure of viral mRNAs. N7-methyl guanosine cap is a prerequisite for binding of nsp16. Therefore plays an essential role in viral mRNAs cap methylation which is essential to evade immune system. This is Replicase polyprotein 1ab (rep) from Bos taurus (Bovine).